We begin with the raw amino-acid sequence, 140 residues long: Large ribosomal subunit protein bL17 (140 aa).

Residues 120 to 140 (EDAKGQDSGPVMVDEDDFAEA) are disordered.

Belongs to the bacterial ribosomal protein bL17 family. As to quaternary structure, part of the 50S ribosomal subunit. Contacts protein L32.

The polypeptide is Large ribosomal subunit protein bL17 (Erythrobacter litoralis (strain HTCC2594)).